Consider the following 72-residue polypeptide: MVIKRNLLSNHVDEIIGEYYAAKGYSVHSIDRQENGQLIVVTERVAEEKENAKVDIAFDFVHRRPHKKKYLA.

This Bacillus subtilis (strain 168) protein is SPbeta prophage-derived uncharacterized protein YoqN (yoqN).